The chain runs to 319 residues: Probable murein peptide carboxypeptidase (319 aa).

S116 serves as the catalytic Nucleophile. Active-site charge relay system residues include E214 and H284.

The protein belongs to the peptidase S66 family.

The protein resides in the cytoplasm. The protein operates within cell wall degradation; peptidoglycan degradation. Functionally, may be involved in the degradation of peptidoglycan by catalyzing the cleavage of the terminal D-alanine residue from cytoplasmic murein peptides. This chain is Probable murein peptide carboxypeptidase (ykfA), found in Bacillus subtilis (strain 168).